Reading from the N-terminus, the 199-residue chain is Protein MA_3591 (199 aa).

In terms of domain architecture, AMMECR1 spans 5–196 (TEGRVAVKLA…EKEPEGEVIE (192 aa)).

This is Protein MA_3591 from Methanosarcina acetivorans (strain ATCC 35395 / DSM 2834 / JCM 12185 / C2A).